The sequence spans 223 residues: Holliday junction branch migration complex subunit RuvA (223 aa).

Residues 1–67 (MIGWLKGEKI…EDGSNLFGFI (67 aa)) are domain I. Residues 68-146 (EKSERDLFRK…DFDLNNEFSP (79 aa)) are domain II. Positions 147–157 (PTKLRPESAED) are flexible linker. The interval 158 to 223 (LNEELLTEIK…FKQALITLNK (66 aa)) is domain III.

The protein belongs to the RuvA family. Homotetramer. Forms an RuvA(8)-RuvB(12)-Holliday junction (HJ) complex. HJ DNA is sandwiched between 2 RuvA tetramers; dsDNA enters through RuvA and exits via RuvB. An RuvB hexamer assembles on each DNA strand where it exits the tetramer. Each RuvB hexamer is contacted by two RuvA subunits (via domain III) on 2 adjacent RuvB subunits; this complex drives branch migration. In the full resolvosome a probable DNA-RuvA(4)-RuvB(12)-RuvC(2) complex forms which resolves the HJ.

It is found in the cytoplasm. In terms of biological role, the RuvA-RuvB-RuvC complex processes Holliday junction (HJ) DNA during genetic recombination and DNA repair, while the RuvA-RuvB complex plays an important role in the rescue of blocked DNA replication forks via replication fork reversal (RFR). RuvA specifically binds to HJ cruciform DNA, conferring on it an open structure. The RuvB hexamer acts as an ATP-dependent pump, pulling dsDNA into and through the RuvAB complex. HJ branch migration allows RuvC to scan DNA until it finds its consensus sequence, where it cleaves and resolves the cruciform DNA. The polypeptide is Holliday junction branch migration complex subunit RuvA (Prochlorococcus marinus (strain MIT 9211)).